The following is a 390-amino-acid chain: S-adenosylmethionine synthase 2 (390 aa).

Glutamate 9 contacts Mg(2+). ATP is bound at residue histidine 15. Position 43 (glutamate 43) interacts with K(+). Residues glutamate 56 and glutamine 99 each coordinate L-methionine. Residues aspartate 167–lysine 169, serine 235–phenylalanine 238, aspartate 246, arginine 252–lysine 253, alanine 269, lysine 273, and lysine 277 contribute to the ATP site. Residue aspartate 246 coordinates L-methionine. Position 277 (lysine 277) interacts with L-methionine.

It belongs to the AdoMet synthase family. As to quaternary structure, homotetramer. Mn(2+) is required as a cofactor. The cofactor is Mg(2+). It depends on Co(2+) as a cofactor. K(+) serves as cofactor.

It localises to the cytoplasm. It catalyses the reaction L-methionine + ATP + H2O = S-adenosyl-L-methionine + phosphate + diphosphate. Its pathway is amino-acid biosynthesis; S-adenosyl-L-methionine biosynthesis; S-adenosyl-L-methionine from L-methionine: step 1/1. Functionally, catalyzes the formation of S-adenosylmethionine from methionine and ATP. The reaction comprises two steps that are both catalyzed by the same enzyme: formation of S-adenosylmethionine (AdoMet) and triphosphate, and subsequent hydrolysis of the triphosphate. This is S-adenosylmethionine synthase 2 (SAM2) from Actinidia chinensis var. chinensis (Chinese soft-hair kiwi).